A 507-amino-acid polypeptide reads, in one-letter code: Capsid vertex component 1 (507 aa).

Residues 219 to 257 (AAAETSVSKHHPALENPSNIRGSAGGEGGGGRAGTGGTV) are disordered. The span at 241 to 257 (SAGGEGGGGRAGTGGTV) shows a compositional bias: gly residues.

This sequence belongs to the herpesviridae CVC1 protein family. In terms of assembly, interacts (via C-terminus) with capsid vertex component 2/CVC2.

It is found in the virion. The protein resides in the host nucleus. In terms of biological role, capsid vertex-specific component that plays a role during viral DNA encapsidation, assuring correct genome cleavage and presumably stabilizing capsids that contain full-length viral genomes. The polypeptide is Capsid vertex component 1 (Epstein-Barr virus (strain B95-8) (HHV-4)).